Reading from the N-terminus, the 404-residue chain is Cysteine desulfurase IscS (404 aa).

Pyridoxal 5'-phosphate-binding positions include 75–76, N155, Q183, and 203–205; these read AT and SAH. K206 carries the N6-(pyridoxal phosphate)lysine modification. T243 contacts pyridoxal 5'-phosphate. The active-site Cysteine persulfide intermediate is the C328. C328 is a [2Fe-2S] cluster binding site.

Belongs to the class-V pyridoxal-phosphate-dependent aminotransferase family. NifS/IscS subfamily. Homodimer. Forms a heterotetramer with IscU, interacts with other sulfur acceptors. It depends on pyridoxal 5'-phosphate as a cofactor.

The protein resides in the cytoplasm. The enzyme catalyses (sulfur carrier)-H + L-cysteine = (sulfur carrier)-SH + L-alanine. It functions in the pathway cofactor biosynthesis; iron-sulfur cluster biosynthesis. Master enzyme that delivers sulfur to a number of partners involved in Fe-S cluster assembly, tRNA modification or cofactor biosynthesis. Catalyzes the removal of elemental sulfur atoms from cysteine to produce alanine. Functions as a sulfur delivery protein for Fe-S cluster synthesis onto IscU, an Fe-S scaffold assembly protein, as well as other S acceptor proteins. The sequence is that of Cysteine desulfurase IscS from Stutzerimonas stutzeri (strain A1501) (Pseudomonas stutzeri).